The following is a 441-amino-acid chain: Ribosomal protein uS12 methylthiotransferase RimO (441 aa).

The MTTase N-terminal domain occupies 8 to 118; the sequence is PKIGFVSLGC…VLQHVHHYVP (111 aa). Residues C17, C53, C82, C150, C154, and C157 each coordinate [4Fe-4S] cluster. The region spanning 136–373 is the Radical SAM core domain; it reads LTPRHYAYLK…MQLQQQISAE (238 aa). Residues 376-441 enclose the TRAM domain; sequence QEKVGREILV…DEYDLWGSRV (66 aa).

It belongs to the methylthiotransferase family. RimO subfamily. The cofactor is [4Fe-4S] cluster.

It localises to the cytoplasm. The catalysed reaction is L-aspartate(89)-[ribosomal protein uS12]-hydrogen + (sulfur carrier)-SH + AH2 + 2 S-adenosyl-L-methionine = 3-methylsulfanyl-L-aspartate(89)-[ribosomal protein uS12]-hydrogen + (sulfur carrier)-H + 5'-deoxyadenosine + L-methionine + A + S-adenosyl-L-homocysteine + 2 H(+). In terms of biological role, catalyzes the methylthiolation of an aspartic acid residue of ribosomal protein uS12. The chain is Ribosomal protein uS12 methylthiotransferase RimO from Salmonella heidelberg (strain SL476).